Reading from the N-terminus, the 300-residue chain is Ornithine carbamoyltransferase (300 aa).

Carbamoyl phosphate is bound by residues 49–52 (STRT), Gln-76, Arg-100, and 127–130 (HPCQ). Residues Asn-158, Asp-218, and 222–223 (SM) each bind L-ornithine. Carbamoyl phosphate contacts are provided by residues 258-259 (CL) and Arg-286.

It belongs to the aspartate/ornithine carbamoyltransferase superfamily. OTCase family.

It localises to the cytoplasm. It carries out the reaction carbamoyl phosphate + L-ornithine = L-citrulline + phosphate + H(+). It participates in amino-acid biosynthesis; L-arginine biosynthesis; L-arginine from L-ornithine and carbamoyl phosphate: step 1/3. In terms of biological role, reversibly catalyzes the transfer of the carbamoyl group from carbamoyl phosphate (CP) to the N(epsilon) atom of ornithine (ORN) to produce L-citrulline. The protein is Ornithine carbamoyltransferase of Oleidesulfovibrio alaskensis (strain ATCC BAA-1058 / DSM 17464 / G20) (Desulfovibrio alaskensis).